The following is a 347-amino-acid chain: ATPase GET3 (347 aa).

ATP is bound at residue 26–33 (KGGVGKTT). D57 is a catalytic residue. 2 residues coordinate ATP: E241 and N268. Residues C279 and C282 each contribute to the Zn(2+) site.

The protein belongs to the arsA ATPase family. Homodimer. Component of the Golgi to ER traffic (GET) complex, which is composed of GET1, GET2 and GET3. Within the complex, GET1 and GET2 form a heterotetramer which is stabilized by phosphatidylinositol binding and which binds to the GET3 homodimer. Interacts with the chloride channel protein GEF1.

The protein localises to the cytoplasm. It is found in the endoplasmic reticulum. It localises to the golgi apparatus. Its function is as follows. ATPase required for the post-translational delivery of tail-anchored (TA) proteins to the endoplasmic reticulum. Recognizes and selectively binds the transmembrane domain of TA proteins in the cytosol. This complex then targets to the endoplasmic reticulum by membrane-bound receptors GET1 and GET2, where the tail-anchored protein is released for insertion. This process is regulated by ATP binding and hydrolysis. ATP binding drives the homodimer towards the closed dimer state, facilitating recognition of newly synthesized TA membrane proteins. ATP hydrolysis is required for insertion. Subsequently, the homodimer reverts towards the open dimer state, lowering its affinity for the GET1-GET2 receptor, and returning it to the cytosol to initiate a new round of targeting. Cooperates with the HDEL receptor ERD2 to mediate the ATP-dependent retrieval of resident ER proteins that contain a C-terminal H-D-E-L retention signal from the Golgi to the ER. Involved in low-level resistance to the oxyanions arsenite and arsenate, and in heat tolerance. The protein is ATPase GET3 of Meyerozyma guilliermondii (strain ATCC 6260 / CBS 566 / DSM 6381 / JCM 1539 / NBRC 10279 / NRRL Y-324) (Yeast).